We begin with the raw amino-acid sequence, 479 residues long: Glutamate--tRNA ligase (479 aa).

A 'HIGH' region motif is present at residues 11 to 21 (PSPTGYLHIGG). 4 residues coordinate Zn(2+): cysteine 108, cysteine 110, cysteine 135, and glutamate 137. The 'KMSKS' region signature appears at 250–254 (KLSKR). Position 253 (lysine 253) interacts with ATP.

Belongs to the class-I aminoacyl-tRNA synthetase family. Glutamate--tRNA ligase type 1 subfamily. As to quaternary structure, monomer. The cofactor is Zn(2+).

Its subcellular location is the cytoplasm. It catalyses the reaction tRNA(Glu) + L-glutamate + ATP = L-glutamyl-tRNA(Glu) + AMP + diphosphate. Functionally, catalyzes the attachment of glutamate to tRNA(Glu) in a two-step reaction: glutamate is first activated by ATP to form Glu-AMP and then transferred to the acceptor end of tRNA(Glu). In Myxococcus xanthus (strain DK1622), this protein is Glutamate--tRNA ligase.